Consider the following 443-residue polypeptide: ATP-dependent protease ATPase subunit HslU (443 aa).

ATP-binding positions include valine 18, 60-65, aspartate 255, glutamate 321, and arginine 393; that span reads GVGKTE.

Belongs to the ClpX chaperone family. HslU subfamily. As to quaternary structure, a double ring-shaped homohexamer of HslV is capped on each side by a ring-shaped HslU homohexamer. The assembly of the HslU/HslV complex is dependent on binding of ATP.

It is found in the cytoplasm. ATPase subunit of a proteasome-like degradation complex; this subunit has chaperone activity. The binding of ATP and its subsequent hydrolysis by HslU are essential for unfolding of protein substrates subsequently hydrolyzed by HslV. HslU recognizes the N-terminal part of its protein substrates and unfolds these before they are guided to HslV for hydrolysis. The protein is ATP-dependent protease ATPase subunit HslU of Colwellia psychrerythraea (strain 34H / ATCC BAA-681) (Vibrio psychroerythus).